The sequence spans 480 residues: Probable cyclodipeptide synthase PUL1 (480 aa).

It functions in the pathway siderophore biosynthesis. Functionally, probable cyclodipeptide synthase; part of the PUL gene cluster that mediates the formation of pulcherrimin, a red iron-containing pigment composed of two cyclized and modified leucine molecules that acts as a siderophore, a chelator that binds iron outside the cell for subsequent uptake. Two leucine molecules are cyclized via a cyclodipeptide synthase, and the resulting diketopiperazine is oxidized by a cytochrome P450 monooxygenase to generate pulcherriminic acid (PA), which can then spontaneously bind iron to form pulcherrimin. The probable cyclodipeptide synthase PUL1 and the cytochrome P450 monooxygenase PUL2 encode the enzymes responsible for the two-step pulcherrimin biosynthesis pathway. This Kluyveromyces lactis (strain ATCC 8585 / CBS 2359 / DSM 70799 / NBRC 1267 / NRRL Y-1140 / WM37) (Yeast) protein is Probable cyclodipeptide synthase PUL1.